The primary structure comprises 232 residues: NAD(P)H-hydrate epimerase (232 aa).

The YjeF N-terminal domain occupies 9 to 219; that stretch reads AISVDEELFN…KLQDKYAMEL (211 aa). 62–66 is a binding site for (6S)-NADPHX; that stretch reads NNGGD. Residues asparagine 63 and aspartate 127 each coordinate K(+). (6S)-NADPHX contacts are provided by residues 131-137 and aspartate 160; that span reads GFSFKPP. Serine 163 contributes to the K(+) binding site.

It belongs to the NnrE/AIBP family. The cofactor is K(+).

It catalyses the reaction (6R)-NADHX = (6S)-NADHX. The enzyme catalyses (6R)-NADPHX = (6S)-NADPHX. Catalyzes the epimerization of the S- and R-forms of NAD(P)HX, a damaged form of NAD(P)H that is a result of enzymatic or heat-dependent hydration. This is a prerequisite for the S-specific NAD(P)H-hydrate dehydratase to allow the repair of both epimers of NAD(P)HX. This Aedes aegypti (Yellowfever mosquito) protein is NAD(P)H-hydrate epimerase.